We begin with the raw amino-acid sequence, 449 residues long: Tubulin alpha-8 chain (449 aa).

The MREC motif motif lies at 1-4; sequence MREC. The GTP site is built by Gln-11, Glu-71, Ser-140, Gly-144, Thr-145, Thr-179, Asn-206, and Asn-228. Glu-71 contributes to the Mg(2+) binding site. Residue Glu-254 is part of the active site.

It belongs to the tubulin family. In terms of assembly, dimer of alpha and beta chains. A typical microtubule is a hollow water-filled tube with an outer diameter of 25 nm and an inner diameter of 15 nM. Alpha-beta heterodimers associate head-to-tail to form protofilaments running lengthwise along the microtubule wall with the beta-tubulin subunit facing the microtubule plus end conferring a structural polarity. Microtubules usually have 13 protofilaments but different protofilament numbers can be found in some organisms and specialized cells. Mg(2+) is required as a cofactor. Post-translationally, some glutamate residues at the C-terminus are polyglycylated, resulting in polyglycine chains on the gamma-carboxyl group. Glycylation is mainly limited to tubulin incorporated into axonemes (cilia and flagella) whereas glutamylation is prevalent in neuronal cells, centrioles, axonemes, and the mitotic spindle. Both modifications can coexist on the same protein on adjacent residues, and lowering polyglycylation levels increases polyglutamylation, and reciprocally. Cilia and flagella glycylation is required for their stability and maintenance. Flagella glycylation controls sperm motility. Some glutamate residues at the C-terminus are polyglutamylated, resulting in polyglutamate chains on the gamma-carboxyl group. Polyglutamylation plays a key role in microtubule severing by spastin (SPAST). SPAST preferentially recognizes and acts on microtubules decorated with short polyglutamate tails: severing activity by SPAST increases as the number of glutamates per tubulin rises from one to eight, but decreases beyond this glutamylation threshold. Glutamylation is also involved in cilia motility. In terms of processing, the C-terminal phenylalanine residue is cleaved by MATCAP1/KIAA0895L.

The protein localises to the cytoplasm. It localises to the cytoskeleton. The catalysed reaction is GTP + H2O = GDP + phosphate + H(+). Functionally, tubulin is the major constituent of microtubules, a cylinder consisting of laterally associated linear protofilaments composed of alpha- and beta-tubulin heterodimers. Microtubules grow by the addition of GTP-tubulin dimers to the microtubule end, where a stabilizing cap forms. Below the cap, tubulin dimers are in GDP-bound state, owing to GTPase activity of alpha-tubulin. The chain is Tubulin alpha-8 chain (Tuba8) from Rattus norvegicus (Rat).